Consider the following 197-residue polypeptide: ATP-dependent Clp protease proteolytic subunit (197 aa).

S102 serves as the catalytic Nucleophile. H127 is a catalytic residue.

This sequence belongs to the peptidase S14 family. Fourteen ClpP subunits assemble into 2 heptameric rings which stack back to back to give a disk-like structure with a central cavity, resembling the structure of eukaryotic proteasomes.

It is found in the cytoplasm. The enzyme catalyses Hydrolysis of proteins to small peptides in the presence of ATP and magnesium. alpha-casein is the usual test substrate. In the absence of ATP, only oligopeptides shorter than five residues are hydrolyzed (such as succinyl-Leu-Tyr-|-NHMec, and Leu-Tyr-Leu-|-Tyr-Trp, in which cleavage of the -Tyr-|-Leu- and -Tyr-|-Trp bonds also occurs).. Cleaves peptides in various proteins in a process that requires ATP hydrolysis. Has a chymotrypsin-like activity. Plays a major role in the degradation of misfolded proteins. This chain is ATP-dependent Clp protease proteolytic subunit, found in Borreliella afzelii (strain PKo) (Borrelia afzelii).